The following is a 262-amino-acid chain: Flap endonuclease Xni (262 aa).

Asp105 is a Mg(2+) binding site. One can recognise a 5'-3' exonuclease domain in the interval 162–259 (ERSQFLDLMA…VIDSQPEKTI (98 aa)). K(+) contacts are provided by Leu172, Ala173, Pro181, Ile183, and Ile186. The segment at 185 to 190 (GIGPKS) is interaction with DNA.

It belongs to the Xni family. Mg(2+) is required as a cofactor. Requires K(+) as cofactor.

Functionally, has flap endonuclease activity. During DNA replication, flap endonucleases cleave the 5'-overhanging flap structure that is generated by displacement synthesis when DNA polymerase encounters the 5'-end of a downstream Okazaki fragment. This is Flap endonuclease Xni from Shewanella baltica (strain OS185).